The following is a 480-amino-acid chain: Gamma-aminobutyric acid receptor subunit rho-1 (480 aa).

Residues 1–21 (MLAVQNMKFGIFLLWWGWVLA) form the signal peptide. The Extracellular segment spans residues 22 to 281 (AESTAHWPGR…LYINFTLRRH (260 aa)). Positions 29 to 38 (PGREVHEPSR) are enriched in basic and acidic residues. A disordered region spans residues 29-67 (PGREVHEPSRKGSRPQRQRRGAHDDAHKQGSPILRRSSD). Basic residues predominate over residues 39-48 (KGSRPQRQRR). 4-aminobutanoate is bound at residue arginine 126. An N-linked (GlcNAc...) asparagine glycan is attached at asparagine 141. Serine 190 is a binding site for 4-aminobutanoate. An intrachain disulfide couples cysteine 199 to cysteine 213. Glutamate 218 lines the 4-aminobutanoate pocket. N-linked (GlcNAc...) asparagine glycans are attached at residues asparagine 235 and asparagine 275. A helical membrane pass occupies residues 282–302 (IFFFLLQTYFPATLMVMLSWV). The Cytoplasmic segment spans residues 303–314 (SFWIDRRAVPAR). A helical membrane pass occupies residues 315 to 335 (VPLGITTVLTMSTIITGVNAS). Over 336-346 (MPRVSYIKAVD) the chain is Extracellular. The helical transmembrane segment at 347–367 (IYLWVSFVFVFLSVLEYAAVN) threads the bilayer. Topologically, residues 368–458 (YLTTVQERKE…MRINTHAIDK (91 aa)) are cytoplasmic. A helical membrane pass occupies residues 459–479 (YSRIIFPAAYILFNLIYWSIF). Position 480 (serine 480) is a topological domain, extracellular.

Belongs to the ligand-gated ion channel (TC 1.A.9) family. Gamma-aminobutyric acid receptor (TC 1.A.9.5) subfamily. GABRR1 sub-subfamily. In terms of assembly, three rho subunits (rho-1/GBRR1, rho-2/GBRR2 and rho-3/GBRR3) coassemble either to form functional homopentamers or heteropentamers. Rho-1/GBRR1 subunits can also associate with alpha-1/GBRA1 subunits to form a functional GABAAR. Interacts with SQSTM1. As to expression, expressed in the cerebellum.

The protein resides in the postsynaptic cell membrane. Its subcellular location is the cell membrane. It catalyses the reaction chloride(in) = chloride(out). Inhibited by TPMPA, a rho-specific antagonist, when forming a homopentamer. In contrast with other GABAARs, rho-1 GABAAR is not inhibited by bicuculline when forming a homopentamer. Rho subunit of the pentameric ligand-gated chloride channels responsible for mediating the effects of gamma-aminobutyric acid (GABA), the major inhibitory neurotransmitter in the brain. Rho-containing GABA-gated chloride channels are a subclass of GABA(A) receptors (GABAARs) entirely composed of rho subunits, where GABA molecules bind at the rho intersubunit interfaces. When activated by GABA, rho-GABAARs selectively allow the flow of chloride anions across the cell membrane down their electrochemical gradient. Rho-1 subunits are primarily expressed in retina where rho-1-containing GABAARs play a role in retinal neurotransmission. Rho-1 GABAARs are also involved in neuronal tonic (extrasynaptic) and phasic (synaptic) transmission in the Purkinje neurons of the cerebellum. Rho-1 GABAARs may also contribute to the regulation of glial development in the cerebellum by controlling extrasynaptic transmission. This chain is Gamma-aminobutyric acid receptor subunit rho-1, found in Mus musculus (Mouse).